The following is a 272-amino-acid chain: Transcription factor PU.1 (272 aa).

The tract at residues 126–165 is disordered; the sequence is SPAHQQSSDEEEGERQSPPLEVSDGEADGLEPGPGLLHGE. Phosphoserine occurs at positions 142 and 148. The span at 155 to 165 shows a compositional bias: low complexity; it reads LEPGPGLLHGE. A DNA-binding region (ETS) is located at residues 172 to 255; the sequence is IRLYQFLLDL…VKKKLTYQFS (84 aa). DNA is bound by residues K219, R232, R235, and K245.

It belongs to the ETS family. Binds DNA as a monomer. Can form homomers. Directly interacts with CEBPD/NF-IL6-beta; this interaction does not affect DNA-binding properties of each partner. Interacts with NONO/p54(nrb). Interacts with RUNX1/AML1. Interacts with GFI1; the interaction represses SPI1 transcriptional activity, hence blocks SPI1-induced macrophage differentiation of myeloid progenitor cells. Interacts with CEBPE. Interacts with IRF4/Pip and IRF8. Interacts with JUN. Interacts with RB1. Interacts with TBP. As to expression, expressed in spleen, thymus and bone-marrow macrophages.

It localises to the nucleus. Its activity is regulated as follows. Transcriptional activity at macrophage-specific genes is inhibited by interaction with GFI1, which results in inhibition of SPI1-induced macrophage differentiation of myeloid progenitor cells, but not that of the granulocyte lineage. Pioneer transcription factor, which controls hematopoietic cell fate by decompacting stem cell heterochromatin and allowing other transcription factors to enter otherwise inaccessible genomic sites. Once in open chromatin, can directly control gene expression by binding genetic regulatory elements and can also more broadly influence transcription by recruiting transcription factors, such as interferon regulatory factors (IRFs), to otherwise inaccessible genomic regions. Transcriptionally activates genes important for myeloid and lymphoid lineages, such as CSF1R. Transcriptional activation from certain promoters, possibly containing low affinity binding sites, is achieved cooperatively with other transcription factors. FCER1A transactivation is achieved in cooperation with GATA1. May be particularly important for the pro- to pre-B cell transition. Binds (via the ETS domain) onto the purine-rich DNA core sequence 5'-GAGGAA-3', also known as the PU-box. In vitro can bind RNA and interfere with pre-mRNA splicing. The sequence is that of Transcription factor PU.1 (Spi1) from Mus musculus (Mouse).